Reading from the N-terminus, the 222-residue chain is Endonuclease V (222 aa).

Asp43 and Asp109 together coordinate Mg(2+).

It belongs to the endonuclease V family. The cofactor is Mg(2+).

The protein localises to the cytoplasm. It catalyses the reaction Endonucleolytic cleavage at apurinic or apyrimidinic sites to products with a 5'-phosphate.. Functionally, DNA repair enzyme involved in the repair of deaminated bases. Selectively cleaves double-stranded DNA at the second phosphodiester bond 3' to a deoxyinosine leaving behind the intact lesion on the nicked DNA. This is Endonuclease V from Roseiflexus sp. (strain RS-1).